We begin with the raw amino-acid sequence, 590 residues long: Arginine--tRNA ligase (590 aa).

Positions 130 to 140 (PNIAKEMHVGH) match the 'HIGH' region motif.

It belongs to the class-I aminoacyl-tRNA synthetase family. In terms of assembly, monomer.

The protein localises to the cytoplasm. The enzyme catalyses tRNA(Arg) + L-arginine + ATP = L-arginyl-tRNA(Arg) + AMP + diphosphate. The protein is Arginine--tRNA ligase of Synechococcus sp. (strain CC9311).